The chain runs to 864 residues: Nitrate reductase [NADH] (864 aa).

Residue C139 participates in Mo-molybdopterin binding. Positions 497–572 constitute a Cytochrome b5 heme-binding domain; sequence PRQYTMEEVA…LAQYYIGDLV (76 aa). Residues H532 and H555 each contribute to the heme site. The FAD-binding FR-type domain occupies 606–718; it reads RQKVKLPLIE…KGPLGHFVYD (113 aa). FAD-binding positions include 658 to 661, 675 to 679, F680, F687, 692 to 694, and T746; these read RAYT, LIKVY, and KMS.

Belongs to the nitrate reductase family. Homodimer. It depends on FAD as a cofactor. The cofactor is heme. Mo-molybdopterin is required as a cofactor.

The enzyme catalyses nitrite + NAD(+) + H2O = nitrate + NADH + H(+). Nitrate reductase is a key enzyme involved in the first step of nitrate assimilation in plants, fungi and bacteria. This is Nitrate reductase [NADH] (NITA) from Volvox carteri (Green alga).